The sequence spans 105 residues: uncharacterized protein (105 aa).

The N-terminal stretch at 1-19 is a signal peptide; sequence MKLVFIFATAAIMGVVVYG.

This is an uncharacterized protein from Magallana gigas (Pacific oyster).